The primary structure comprises 81 residues: Small ribosomal subunit protein bS16 (81 aa).

This sequence belongs to the bacterial ribosomal protein bS16 family.

This chain is Small ribosomal subunit protein bS16, found in Lachnoclostridium phytofermentans (strain ATCC 700394 / DSM 18823 / ISDg) (Clostridium phytofermentans).